Consider the following 1060-residue polypeptide: MLIEDVDALKSWLAKLLEPICDADPSALANYVVALVKKDKPEKELKAFCADQLDVFLQKETSGFVDKLFESLYTKNYLPPLEPVKPEPKPLVQEKEEIKEEVFQEPAEEERDTRKKKYPSPQKSRSESSERRTREKKREDGKWRDYERYYERNELYREKYDWRRGRSKSRSKSRGLSRSRSRSRGRSKDRDPNRNVEHRERSKFKSERNDLESSYVPVSAPPPSSSEQYSSGAQSIPSTVTVIAPAHHSENTTESWSNYYNNHSSSNSFGRNPPPKRRCRDYDERGFCVLGDLCQFDHGNDPLVVDEVALPSMIPFPPPPPGLPPPPPPGMLMPPMPGPGPGPGPGPGPGPGPGPGPGHSMRLPVPQGHGQPPPSVVLPIPRPPISQSSLINSRDQPGTSAVPNLAPVGARLPPPLPQNLLYTVSERQPMYSREHGAAASERLQLGTPPPLLAARLVPPRNLMGSSIGYHTSVSSPTPLVPDTYEPDGYNPEAPSITSSGRSQYRQFFSRAQTQRPNLIGLTSGDMDANPRAANIVIQTEPPVPVSVNSNVTRVVLEPESRKRAISGLEGPLTKKPWLGKQGNNNQSKPGFLRKNHYTNTKLEVKKIPQELNNITKLNEHFSKFGTIVNIQVAFKGDPEAALIQYLTNEEARKAISSTEAVLNNRFIRVLWHRENNEQPALQSSAQILLQQQHTLSHLSQQHHSLPQHLHPQQVMVTQSSPSSVHGGIQKMMGKPQTSGAYVLNKVPVKHRLGHASTNQSDTSHLLNQTGGSSGEDCPVFSTPGHPKTIYSSSNLKAPSKLCSGSKSHDVQEVLKKKQEAMKLQQDMRKKKQEMLEKQIECQKMLISKLEKNKNMKPEERANIMKTLKELGEKISQLKDELKTSSTVSTPSKVKTKTEAQKELLDTELDLHKRLSSGEDTTELRKKLSQLQVEAARLGILPVGRGKTISSQGRGRGRGRGRGRGSLNHMVVDHRPKALPGGGFIEEEKDELLQHFSATNQASKFKDRRLQISWHKPKVPSISTETEEEEVKEEETETSDLFLHDDDDEDEDEYESRSWRR.

3 disordered regions span residues 80-143 (PLEP…DGKW), 160-278 (YDWR…PKRR), and 319-416 (PPPG…PPPL). Composition is skewed to basic and acidic residues over residues 84-102 (VKPEPKPLVQEKEEIKEEV) and 124-143 (SRSESSERRTREKKREDGKW). Positions 165–185 (GRSKSRSKSRGLSRSRSRSRG) are enriched in basic residues. Basic and acidic residues predominate over residues 186 to 211 (RSKDRDPNRNVEHRERSKFKSERNDL). Low complexity-rich tracts occupy residues 225–235 (SSEQYSSGAQS) and 255–268 (SWSNYYNNHSSSNS). The C3H1-type zinc-finger motif lies at 273–301 (PPPKRRCRDYDERGFCVLGDLCQFDHGND). Pro residues-rich tracts occupy residues 319-356 (PPPGLPPPPPPGMLMPPMPGPGPGPGPGPGPGPGPGPG) and 371-384 (QPPPSVVLPIPRPP). Polar residues predominate over residues 387–402 (QSSLINSRDQPGTSAV). A Phosphothreonine modification is found at Thr447. Omega-N-methylarginine is present on Arg455. Residues 572-594 (LTKKPWLGKQGNNNQSKPGFLRK) form a disordered region. The region spanning 600–674 (TKLEVKKIPQ…RFIRVLWHRE (75 aa)) is the RRM domain. The segment at 754–775 (HASTNQSDTSHLLNQTGGSSGE) is disordered. Over residues 755 to 770 (ASTNQSDTSHLLNQTG) the composition is skewed to polar residues. The stretch at 810-887 (VQEVLKKKQE…KDELKTSSTV (78 aa)) forms a coiled coil. At Ser928 the chain carries Phosphoserine. The interval 943–982 (GRGKTISSQGRGRGRGRGRGRGSLNHMVVDHRPKALPGGG) is disordered. 2 positions are modified to phosphoserine: Ser1012 and Ser1020. Residues 1014–1060 (HKPKVPSISTETEEEEVKEEETETSDLFLHDDDDEDEDEYESRSWRR) form a disordered region. Composition is skewed to acidic residues over residues 1024–1037 (ETEEEEVKEEETET) and 1044–1053 (DDDDEDEDEY).

It localises to the cytoplasm. It is found in the nucleus speckle. May be involved in the turnover of nuclear polyadenylated (pA+) RNA. This Mus musculus (Mouse) protein is RNA-binding protein 27.